The sequence spans 478 residues: Proline--tRNA ligase (478 aa).

This sequence belongs to the class-II aminoacyl-tRNA synthetase family. ProS type 3 subfamily. As to quaternary structure, homodimer.

It is found in the cytoplasm. It carries out the reaction tRNA(Pro) + L-proline + ATP = L-prolyl-tRNA(Pro) + AMP + diphosphate. Catalyzes the attachment of proline to tRNA(Pro) in a two-step reaction: proline is first activated by ATP to form Pro-AMP and then transferred to the acceptor end of tRNA(Pro). This Clostridium botulinum (strain Loch Maree / Type A3) protein is Proline--tRNA ligase.